Consider the following 205-residue polypeptide: MNLFKPRILVLFAATALISGIAIVAQTSVADSGDKITATSSLKTPIVNRAITESEVLAAQKAWGEALVAISTTYDAKGKASAKALAEKVIDDAYGYQFGPVLFKPTLAISPRTFRTTRAGALAYFVGDDKAFPEDKGFALSSWRKVEIKNAAIFITGNTATTMGNVIITDKQGKATTVDKTWQFLKDDHGKLRIITHHSSLPYEQ.

The signal sequence occupies residues 1–24 (MNLFKPRILVLFAATALISGIAIV). Hydrogencarbonate contacts are provided by Thr-106 and Tyr-124.

This sequence belongs to the iota-class carbonic anhydrase family. In terms of assembly, homotetramer; dimer of dimers. Does not require a metal cofactor. is required as a cofactor.

It catalyses the reaction hydrogencarbonate + H(+) = CO2 + H2O. With respect to regulation, activity is not affected by EDTA or 2,6-pyridinedicarboxylic acid (PDA). Activity is not affected by addition of most divalent metal ions, except zinc ions which decrease the activity. Inhibited by the iodide ion. In terms of biological role, catalyzes the hydration of carbon dioxide (CO2) to bicarbonate (HCO3(-)). Has only very low bicarbonate dehydration activity. May function even in metal-poor environments. In Nostoc sp. (strain PCC 7120 / SAG 25.82 / UTEX 2576), this protein is Metal-independent carbonic anhydrase.